We begin with the raw amino-acid sequence, 98 residues long: Putative septation protein SpoVG (98 aa).

This sequence belongs to the SpoVG family.

In terms of biological role, could be involved in septation. The sequence is that of Putative septation protein SpoVG from Alkaliphilus metalliredigens (strain QYMF).